Reading from the N-terminus, the 121-residue chain is Pancreatic progenitor cell differentiation and proliferation factor (121 aa).

Disordered regions lie at residues 22–47 (GSTSSNSSCGSSEYAGEVIPHPPGLQ) and 101–121 (SRQLSESSDSGKVEQGSPPPS). A compositionally biased stretch (low complexity) spans 23–33 (STSSNSSCGSS). Positions 101 to 110 (SRQLSESSDS) are enriched in polar residues.

The protein belongs to the PPDPF family.

Functionally, probable regulator of exocrine pancreas development. The sequence is that of Pancreatic progenitor cell differentiation and proliferation factor (ppdpf) from Salmo salar (Atlantic salmon).